The chain runs to 94 residues: UPF0235 protein Dred_0717 (94 aa).

The protein belongs to the UPF0235 family.

The chain is UPF0235 protein Dred_0717 from Desulforamulus reducens (strain ATCC BAA-1160 / DSM 100696 / MI-1) (Desulfotomaculum reducens).